Consider the following 744-residue polypeptide: 4'-phospho-dehydrooxetanocin synthase (744 aa).

The B12-binding domain maps to 119–259 (TVTLVNLCVI…KMLKKELKLD (141 aa)). Residues Arg-135, Ser-139, Ser-184, Gly-241, Glu-242, and Glu-308 each contribute to the cob(II)alamin site. The 247-residue stretch at 299-545 (SKFRGALTLE…IVSYMLASME (247 aa)) folds into the Radical SAM core domain. The [4Fe-4S] cluster site is built by Cys-313, Cys-318, and Cys-321. 5 residues coordinate cob(II)alamin: Pro-322, His-325, Lys-326, Ala-361, and Glu-363. Positions 436 and 545 each coordinate S-adenosyl-L-methionine.

This sequence belongs to the radical SAM superfamily. It depends on [4Fe-4S] cluster as a cofactor. Cob(II)alamin is required as a cofactor.

The enzyme catalyses dAMP + S-adenosyl-L-methionine = 4'-phospho-dehydrooxetanocin + 5'-deoxyadenosine + L-methionine + H(+). It carries out the reaction AH2 + 2 S-adenosyl-L-methionine = 2 5'-deoxyadenosin-5'-yl radical + 2 L-methionine + A + 2 H(+). It catalyses the reaction 2 5'-deoxyadenosin-5'-yl radical + 2 dAMP + A = 2 4'-phospho-dehydrooxetanocin + 2 5'-deoxyadenosine + AH2. Its activity is regulated as follows. Requires OxsA for the oxidative ring contraction activity. Activation of OxsB requires its direct interaction with OxsA and is independent of OxsA phosphohydrolase activity. In contrast to ring contraction, methylation does not require the presence of OxsA. Functionally, isomerase involved in the biosynthesis of oxetanocin A (OXT-A), a nucleoside analog with antitumor, antiviral and antibacterial properties. Catalyzes an oxidative ring contraction of dAMP, forming an oxetane aldehyde. In addition, shows methyltransferase activity in vitro and is able to catalyze the radical mediated, stereoselective C2'-methylation of dAMP to form methylated 2'-dAMP. Also catalyzes the demethylation of S-adenosyl-L-methionine (SAM) to S-adenosyl-L-homocysteine (SAH). This is 4'-phospho-dehydrooxetanocin synthase from Priestia megaterium (Bacillus megaterium).